Here is a 185-residue protein sequence, read N- to C-terminus: GTP cyclohydrolase 1 (185 aa).

Cys75, His78, and Cys146 together coordinate Zn(2+).

This sequence belongs to the GTP cyclohydrolase I family. In terms of assembly, toroid-shaped homodecamer, composed of two pentamers of five dimers.

It catalyses the reaction GTP + H2O = 7,8-dihydroneopterin 3'-triphosphate + formate + H(+). The protein operates within cofactor biosynthesis; 7,8-dihydroneopterin triphosphate biosynthesis; 7,8-dihydroneopterin triphosphate from GTP: step 1/1. This Methylococcus capsulatus (strain ATCC 33009 / NCIMB 11132 / Bath) protein is GTP cyclohydrolase 1.